The primary structure comprises 258 residues: Imidazole glycerol phosphate synthase subunit HisF (258 aa).

Active-site residues include D12 and D131.

Belongs to the HisA/HisF family. In terms of assembly, heterodimer of HisH and HisF.

The protein resides in the cytoplasm. The catalysed reaction is 5-[(5-phospho-1-deoxy-D-ribulos-1-ylimino)methylamino]-1-(5-phospho-beta-D-ribosyl)imidazole-4-carboxamide + L-glutamine = D-erythro-1-(imidazol-4-yl)glycerol 3-phosphate + 5-amino-1-(5-phospho-beta-D-ribosyl)imidazole-4-carboxamide + L-glutamate + H(+). It functions in the pathway amino-acid biosynthesis; L-histidine biosynthesis; L-histidine from 5-phospho-alpha-D-ribose 1-diphosphate: step 5/9. Its function is as follows. IGPS catalyzes the conversion of PRFAR and glutamine to IGP, AICAR and glutamate. The HisF subunit catalyzes the cyclization activity that produces IGP and AICAR from PRFAR using the ammonia provided by the HisH subunit. The protein is Imidazole glycerol phosphate synthase subunit HisF of Nocardioides sp. (strain ATCC BAA-499 / JS614).